Reading from the N-terminus, the 465-residue chain is Kynureninase (465 aa).

Pyridoxal 5'-phosphate is bound by residues Leu116, Thr117, 144-147 (FPSD), Asp231, His234, and Tyr256. An N6-(pyridoxal phosphate)lysine modification is found at Lys257. Pyridoxal 5'-phosphate contacts are provided by Trp291 and Asn319.

The protein belongs to the kynureninase family. Homodimer. Requires pyridoxal 5'-phosphate as cofactor.

The protein resides in the cytoplasm. It carries out the reaction L-kynurenine + H2O = anthranilate + L-alanine + H(+). It catalyses the reaction 3-hydroxy-L-kynurenine + H2O = 3-hydroxyanthranilate + L-alanine + H(+). It functions in the pathway amino-acid degradation; L-kynurenine degradation; L-alanine and anthranilate from L-kynurenine: step 1/1. The protein operates within cofactor biosynthesis; NAD(+) biosynthesis; quinolinate from L-kynurenine: step 2/3. Catalyzes the cleavage of L-kynurenine (L-Kyn) and L-3-hydroxykynurenine (L-3OHKyn) into anthranilic acid (AA) and 3-hydroxyanthranilic acid (3-OHAA), respectively. The polypeptide is Kynureninase (Scheffersomyces stipitis (strain ATCC 58785 / CBS 6054 / NBRC 10063 / NRRL Y-11545) (Yeast)).